We begin with the raw amino-acid sequence, 181 residues long: Large ribosomal subunit protein bL19 (181 aa).

Positions 162-173 (EKKAAAEAEAAK) are enriched in basic and acidic residues. The disordered stretch occupies residues 162 to 181 (EKKAAAEAEAAKAAEATPAE).

Belongs to the bacterial ribosomal protein bL19 family.

In terms of biological role, this protein is located at the 30S-50S ribosomal subunit interface and may play a role in the structure and function of the aminoacyl-tRNA binding site. The protein is Large ribosomal subunit protein bL19 of Mesorhizobium japonicum (strain LMG 29417 / CECT 9101 / MAFF 303099) (Mesorhizobium loti (strain MAFF 303099)).